The sequence spans 452 residues: cAMP/cGMP-dependent 3',5'-cAMP/cGMP phosphodiesterase A (452 aa).

An N-terminal signal peptide occupies residues 1–23 (MALNKKLISLLLLIFIILNIVNS). The propeptide occupies 24–49 (HQQEDCDDDDEDIGISAERSERRSVK). Asn-101, Asn-141, and Asn-277 each carry an N-linked (GlcNAc...) asparagine glycan.

The protein belongs to the cyclic nucleotide phosphodiesterase class-II family.

The protein localises to the secreted. The protein resides in the extracellular space. It is found in the cell surface. It carries out the reaction 3',5'-cyclic AMP + H2O = AMP + H(+). The catalysed reaction is 3',5'-cyclic GMP + H2O = GMP + H(+). Inhibited by dithiotreitol (DTT). Phosphodiesterase which displays a preference for cAMP over cGMP. Involved in the degradation of extracellular cAMP. Maintains the responsiveness of cells to the chemoattractant cAMP during the aggregation phase of development. This is cAMP/cGMP-dependent 3',5'-cAMP/cGMP phosphodiesterase A (pdsA) from Dictyostelium discoideum (Social amoeba).